Reading from the N-terminus, the 337-residue chain is Geranylgeranyl pyrophosphate synthase subD (337 aa).

3 residues coordinate isopentenyl diphosphate: Lys-53, Arg-56, and His-85. Asp-92 and Asp-96 together coordinate Mg(2+). Residue Arg-101 coordinates dimethylallyl diphosphate. Arg-102 contributes to the isopentenyl diphosphate binding site. Residues Lys-179, Thr-180, and Gln-219 each contribute to the dimethylallyl diphosphate site. Asp-222 contacts Mg(2+). Positions 226, 236, and 246 each coordinate dimethylallyl diphosphate.

It belongs to the FPP/GGPP synthase family. Mg(2+) is required as a cofactor.

It catalyses the reaction isopentenyl diphosphate + dimethylallyl diphosphate = (2E)-geranyl diphosphate + diphosphate. The catalysed reaction is isopentenyl diphosphate + (2E)-geranyl diphosphate = (2E,6E)-farnesyl diphosphate + diphosphate. The enzyme catalyses isopentenyl diphosphate + (2E,6E)-farnesyl diphosphate = (2E,6E,10E)-geranylgeranyl diphosphate + diphosphate. Its pathway is secondary metabolite biosynthesis; terpenoid biosynthesis. Its function is as follows. Geranylgeranyl pyrophosphate synthase; part of the gene cluster that mediates the biosynthesis of the immunosuppressants subglutinols, meroterpenoids consisting of an alpha-pyrone (4-hydroxy-5,6-dimethyl-2-pyrone) moiety attached to a decalin core fused to a five-membered cyclic ether carrying a prenylside chain. The first step of the pathway is the synthesis of the alpha-pyrone moiety by the polyketide synthase subA via condensation of one acetyl-CoA starter unit with 3 malonyl-CoA units and 2 methylations. The alpha-pyrone is then combined with geranylgeranyl pyrophosphate (GGPP) formed by the GGPP synthase subD through the action of the prenyltransferase subC to yield a linear alpha-pyrone diterpenoid. Subsequent steps in the subglutinol biosynthetic pathway involve the decalin core formation, which is thought to be initiated by the epoxidation of the C10-C11 olefin by the FAD-dependent oxidoreductase subE. The following cyclization cascade would be catalyzed by the terpene cyclase subB. Lastly, the FAD-dependent dehydrogenase subF probably catalyzes the five-membered cyclic ether formation to complete the formation of subglutinol A. Subsequent redox reactions appear to give rise to subglutinol C and D, however, it remains unclear which enzymes are responsible for these transformations. SubD may have secondary function in the conversion of the identified subglutinols to subglutinol analog 45, which seems to be the major product of the cluster. The chain is Geranylgeranyl pyrophosphate synthase subD from Metarhizium robertsii (strain ARSEF 23 / ATCC MYA-3075) (Metarhizium anisopliae (strain ARSEF 23)).